The primary structure comprises 113 residues: Prefoldin subunit beta (113 aa).

This sequence belongs to the prefoldin subunit beta family. As to quaternary structure, heterohexamer of two alpha and four beta subunits.

The protein resides in the cytoplasm. Functionally, molecular chaperone capable of stabilizing a range of proteins. Seems to fulfill an ATP-independent, HSP70-like function in archaeal de novo protein folding. The protein is Prefoldin subunit beta of Methanococcus vannielii (strain ATCC 35089 / DSM 1224 / JCM 13029 / OCM 148 / SB).